Reading from the N-terminus, the 763-residue chain is Pentatricopeptide repeat-containing protein At4g32430, mitochondrial (763 aa).

The N-terminal 38 residues, 1–38, are a transit peptide targeting the mitochondrion; that stretch reads MTLLNYLHCNRSKSFLFQRFYSPYRIAHKLFDGSSQRN. PPR repeat units follow at residues 77 to 109, 110 to 140, 141 to 172, 173 to 207, 208 to 238, 239 to 274, 275 to 309, 310 to 344, 350 to 370, 371 to 405, 406 to 436, 437 to 471, 472 to 507, 508 to 538, 539 to 573, 574 to 604, and 610 to 640; these read DEVT…GFTS, FVCV…LVDP, DVVS…GVVF, DAFT…GLES, DLVV…MSFK, DMIS…GVEL, DHVS…GYES, LLEV…NVVS, SSNK…GVYP, NEVT…GFVS, EPSV…ITFR, EIIS…TMPN, EYTF…GLNS, CPVV…MSQK, NQFV…NVAP, DLVT…MIEV, and SHEH…VPGG. The interval 645-720 is type E motif; that stretch reads MLQSMLGSCR…EAGFSWIDVG (76 aa). Residues 724–756 are type E(+) motif; it reads GSLTMQGFSSGDKSHPKSDEIYRMVEIIGLEMN.

The protein belongs to the PPR family. PCMP-E subfamily.

Its subcellular location is the mitochondrion. This Arabidopsis thaliana (Mouse-ear cress) protein is Pentatricopeptide repeat-containing protein At4g32430, mitochondrial (PCMP-E40).